Consider the following 655-residue polypeptide: Archaeal Lon protease (655 aa).

Residues 1–123 lie on the Cytoplasmic side of the membrane; it reads MEENIESVEE…KAEREKRDRS (123 aa). 57–64 contributes to the ATP binding site; the sequence is GEPGTGKS. The helical transmembrane segment at 124 to 144 threads the bilayer; it reads RSIMFVIFSVVLLGIIAAIVL. Position 145 (arginine 145) is a topological domain, extracellular. The chain crosses the membrane as a helical span at residues 146–166; that stretch reads SITLIFFAIMAAAFLYMAMAF. At 167–655 the chain is on the cytoplasmic side; it reads NPVIRNEKAM…ASTRAGQNVA (489 aa). A Lon proteolytic domain is found at 433–618; it reads GSVVGMVNGL…EDVLKVALVN (186 aa). Active-site residues include serine 525 and lysine 568.

It belongs to the peptidase S16 family. Archaeal LonB subfamily. In terms of assembly, homohexamer. Organized in a ring with a central cavity.

It localises to the cell membrane. In terms of biological role, ATP-dependent serine protease that mediates the selective degradation of mutant and abnormal proteins as well as certain short-lived regulatory proteins. Degrades polypeptides processively. This Thermoplasma volcanium (strain ATCC 51530 / DSM 4299 / JCM 9571 / NBRC 15438 / GSS1) protein is Archaeal Lon protease.